Reading from the N-terminus, the 854-residue chain is Envelope glycoprotein B (854 aa).

The N-terminal stretch at 1–30 (MSKNWFPLLCASVLVVYVSIASSSTGTASG) is a signal peptide. The Virion surface portion of the chain corresponds to 31 to 723 (AVTPTSPTEN…EGVVGFIKNP (693 aa)). N-linked (GlcNAc...) asparagine; by host glycans are attached at residues Asn-40, Asn-48, and Asn-60. Intrachain disulfides connect Cys-69–Cys-524, Cys-86–Cys-480, Cys-160–Cys-225, Cys-317–Cys-364, and Cys-546–Cys-583. The segment at 127–133 (SYSFIRE) is involved in fusion and/or binding to host membrane. Residue Asn-183 is glycosylated (N-linked (GlcNAc...) asparagine; by host). The segment at 212–219 (GSTWLYTT) is involved in fusion and/or binding to host membrane. N-linked (GlcNAc...) asparagine; by host glycosylation is found at Asn-256, Asn-275, Asn-314, Asn-356, Asn-378, Asn-382, Asn-390, Asn-423, Asn-426, Asn-442, Asn-558, and Asn-595. 2 hydrophobic membrane proximal region regions span residues 669–721 (VEGK…GFIK) and 700–720 (VAIG…VGFI). The chain crosses the membrane as a helical span at residues 724–744 (FGSFTVILFLLAVLGVIYLIY). Residues 745–854 (MRQKRAYEKP…YQKIQNEYEV (110 aa)) are Intravirion-facing.

This sequence belongs to the herpesviridae glycoprotein B family. As to quaternary structure, homotrimer; disulfide-linked. Binds to heparan sulfate proteoglycans. Interacts with gH/gL heterodimer. A proteolytic cleavage by host furin generates two subunits that remain linked by disulfide bonds.

Its subcellular location is the virion membrane. It is found in the host cell membrane. The protein localises to the host endosome membrane. It localises to the host Golgi apparatus membrane. Functionally, envelope glycoprotein that forms spikes at the surface of virion envelope. Essential for the initial attachment to heparan sulfate moieties of the host cell surface proteoglycans. Involved in fusion of viral and cellular membranes leading to virus entry into the host cell. Following initial binding to its host receptors, membrane fusion is mediated by the fusion machinery composed at least of gB and the heterodimer gH/gL. May be involved in the fusion between the virion envelope and the outer nuclear membrane during virion egress. The protein is Envelope glycoprotein B of Macaca mulatta (Rhesus macaque).